The primary structure comprises 192 residues: Ribosome maturation factor RimM (192 aa).

Positions 115-189 (EGEYYLSDLI…RIEITPPKGL (75 aa)) constitute a PRC barrel domain.

It belongs to the RimM family. Binds ribosomal protein uS19.

The protein resides in the cytoplasm. Functionally, an accessory protein needed during the final step in the assembly of 30S ribosomal subunit, possibly for assembly of the head region. Essential for efficient processing of 16S rRNA. May be needed both before and after RbfA during the maturation of 16S rRNA. It has affinity for free ribosomal 30S subunits but not for 70S ribosomes. The chain is Ribosome maturation factor RimM from Acaryochloris marina (strain MBIC 11017).